We begin with the raw amino-acid sequence, 141 residues long: Large ribosomal subunit protein uL11 (141 aa).

It belongs to the universal ribosomal protein uL11 family. In terms of assembly, part of the ribosomal stalk of the 50S ribosomal subunit. Interacts with L10 and the large rRNA to form the base of the stalk. L10 forms an elongated spine to which L12 dimers bind in a sequential fashion forming a multimeric L10(L12)X complex. Post-translationally, one or more lysine residues are methylated.

Forms part of the ribosomal stalk which helps the ribosome interact with GTP-bound translation factors. This Clostridium perfringens (strain ATCC 13124 / DSM 756 / JCM 1290 / NCIMB 6125 / NCTC 8237 / Type A) protein is Large ribosomal subunit protein uL11.